A 794-amino-acid chain; its full sequence is Phosphoribosylformylglycinamidine synthase subunit PurL (794 aa).

Histidine 47 is a catalytic residue. ATP is bound by residues tyrosine 50 and lysine 89. Residue glutamate 91 coordinates Mg(2+). Substrate is bound by residues 92–95 (SHNH) and arginine 114. The active-site Proton acceptor is the histidine 93. Aspartate 115 is a binding site for Mg(2+). Glutamine 238 serves as a coordination point for substrate. Residue aspartate 266 participates in Mg(2+) binding. 310–312 (ESQ) is a binding site for substrate. Residues aspartate 522 and glycine 559 each coordinate ATP. Residue asparagine 560 coordinates Mg(2+). Residue serine 562 coordinates substrate.

It belongs to the FGAMS family. In terms of assembly, monomer. Part of the FGAM synthase complex composed of 1 PurL, 1 PurQ and 2 PurS subunits.

The protein resides in the cytoplasm. It carries out the reaction N(2)-formyl-N(1)-(5-phospho-beta-D-ribosyl)glycinamide + L-glutamine + ATP + H2O = 2-formamido-N(1)-(5-O-phospho-beta-D-ribosyl)acetamidine + L-glutamate + ADP + phosphate + H(+). Its pathway is purine metabolism; IMP biosynthesis via de novo pathway; 5-amino-1-(5-phospho-D-ribosyl)imidazole from N(2)-formyl-N(1)-(5-phospho-D-ribosyl)glycinamide: step 1/2. In terms of biological role, part of the phosphoribosylformylglycinamidine synthase complex involved in the purines biosynthetic pathway. Catalyzes the ATP-dependent conversion of formylglycinamide ribonucleotide (FGAR) and glutamine to yield formylglycinamidine ribonucleotide (FGAM) and glutamate. The FGAM synthase complex is composed of three subunits. PurQ produces an ammonia molecule by converting glutamine to glutamate. PurL transfers the ammonia molecule to FGAR to form FGAM in an ATP-dependent manner. PurS interacts with PurQ and PurL and is thought to assist in the transfer of the ammonia molecule from PurQ to PurL. The sequence is that of Phosphoribosylformylglycinamidine synthase subunit PurL from Prochlorococcus marinus (strain MIT 9303).